The sequence spans 349 residues: Bifunctional nitrilase/nitrile hydratase NIT4A (349 aa).

Residues 29-301 form the CN hydrolase domain; that stretch reads VRATVVQAST…EALISADLDL (273 aa). Residue glutamate 69 is the Proton acceptor of the active site. The active-site Proton donor is the lysine 156. Catalysis depends on cysteine 190, which acts as the Nucleophile.

It belongs to the carbon-nitrogen hydrolase superfamily. Nitrilase family. In terms of tissue distribution, expressed in roots, stems, cotyledons, leaves and flowers.

It is found in the cell membrane. It carries out the reaction a nitrile + 2 H2O = a carboxylate + NH4(+). The catalysed reaction is 3-cyano-L-alanine + 2 H2O = L-aspartate + NH4(+). It catalyses the reaction L-asparagine = 3-cyano-L-alanine + H2O. In terms of biological role, highly specific for beta-cyano-L-alanine (Ala(CN)). Low activity with 3-phenylpropionitrile (PPN). Not associated with auxin production but may be involved in cyanide detoxification. The polypeptide is Bifunctional nitrilase/nitrile hydratase NIT4A (NIT4A) (Nicotiana tabacum (Common tobacco)).